Here is a 513-residue protein sequence, read N- to C-terminus: Histidine ammonia-lyase (513 aa).

The 5-imidazolinone (Ala-Gly) cross-link spans 143–145; sequence ASG. At Ser-144 the chain carries 2,3-didehydroalanine (Ser).

Belongs to the PAL/histidase family. In terms of processing, contains an active site 4-methylidene-imidazol-5-one (MIO), which is formed autocatalytically by cyclization and dehydration of residues Ala-Ser-Gly.

Its subcellular location is the cytoplasm. It carries out the reaction L-histidine = trans-urocanate + NH4(+). The protein operates within amino-acid degradation; L-histidine degradation into L-glutamate; N-formimidoyl-L-glutamate from L-histidine: step 1/3. The sequence is that of Histidine ammonia-lyase from Xanthomonas axonopodis pv. citri (strain 306).